We begin with the raw amino-acid sequence, 158 residues long: Cyclic pyranopterin monophosphate synthase (158 aa).

Residues 75 to 77 and 113 to 114 each bind substrate; these read LCH and ME. Residue Asp128 is part of the active site.

It belongs to the MoaC family. As to quaternary structure, homohexamer; trimer of dimers.

It catalyses the reaction (8S)-3',8-cyclo-7,8-dihydroguanosine 5'-triphosphate = cyclic pyranopterin phosphate + diphosphate. Its pathway is cofactor biosynthesis; molybdopterin biosynthesis. Its function is as follows. Catalyzes the conversion of (8S)-3',8-cyclo-7,8-dihydroguanosine 5'-triphosphate to cyclic pyranopterin monophosphate (cPMP). This is Cyclic pyranopterin monophosphate synthase from Dinoroseobacter shibae (strain DSM 16493 / NCIMB 14021 / DFL 12).